The primary structure comprises 40 residues: Photosystem II reaction center protein J (40 aa).

The helical transmembrane segment at 10–30 (LWIIGTVTGILVIGLIGIFFF) threads the bilayer.

It belongs to the PsbJ family. As to quaternary structure, PSII is composed of 1 copy each of membrane proteins PsbA, PsbB, PsbC, PsbD, PsbE, PsbF, PsbH, PsbI, PsbJ, PsbK, PsbL, PsbM, PsbT, PsbX, PsbY, PsbZ, Psb30/Ycf12, at least 3 peripheral proteins of the oxygen-evolving complex and a large number of cofactors. It forms dimeric complexes.

Its subcellular location is the plastid membrane. In terms of biological role, one of the components of the core complex of photosystem II (PSII). PSII is a light-driven water:plastoquinone oxidoreductase that uses light energy to abstract electrons from H(2)O, generating O(2) and a proton gradient subsequently used for ATP formation. It consists of a core antenna complex that captures photons, and an electron transfer chain that converts photonic excitation into a charge separation. The polypeptide is Photosystem II reaction center protein J (Cuscuta exaltata (Tall dodder)).